We begin with the raw amino-acid sequence, 131 residues long: Profilin-1 (131 aa).

This sequence belongs to the profilin family. In terms of assembly, occurs in many kinds of cells as a complex with monomeric actin in a 1:1 ratio.

It localises to the cytoplasm. The protein localises to the cytoskeleton. Its function is as follows. Binds to actin and affects the structure of the cytoskeleton. At high concentrations, profilin prevents the polymerization of actin, whereas it enhances it at low concentrations. By binding to PIP2, it inhibits the formation of IP3 and DG. The polypeptide is Profilin-1 (PRO1) (Triticum aestivum (Wheat)).